We begin with the raw amino-acid sequence, 124 residues long: Small ribosomal subunit protein uS12 (124 aa).

Asp89 bears the 3-methylthioaspartic acid mark.

It belongs to the universal ribosomal protein uS12 family. In terms of assembly, part of the 30S ribosomal subunit. Contacts proteins S8 and S17. May interact with IF1 in the 30S initiation complex.

Functionally, with S4 and S5 plays an important role in translational accuracy. Interacts with and stabilizes bases of the 16S rRNA that are involved in tRNA selection in the A site and with the mRNA backbone. Located at the interface of the 30S and 50S subunits, it traverses the body of the 30S subunit contacting proteins on the other side and probably holding the rRNA structure together. The combined cluster of proteins S8, S12 and S17 appears to hold together the shoulder and platform of the 30S subunit. This is Small ribosomal subunit protein uS12 from Treponema pallidum subsp. pallidum (strain SS14).